Consider the following 125-residue polypeptide: Large ribosomal subunit protein bL17 (125 aa).

The protein belongs to the bacterial ribosomal protein bL17 family. As to quaternary structure, part of the 50S ribosomal subunit. Contacts protein L32.

The sequence is that of Large ribosomal subunit protein bL17 from Blochmanniella floridana.